We begin with the raw amino-acid sequence, 1322 residues long: Serine/threonine-protein kinase TIO (1322 aa).

One can recognise a Protein kinase domain in the interval 6 to 256; sequence YHVIELVGEG…WPALREHPFV (251 aa). Residues 12-20 and Lys-35 contribute to the ATP site; that span reads VGEGSFGRV. The active-site Proton acceptor is Asp-127. The interval 1000–1322 is required for the binding to Kinesin-12 members; it reads CMEDRDLLKA…VIVAKVSGES (323 aa). 6 ARM repeats span residues 1056-1098, 1101-1140, 1143-1182, 1183-1223, 1226-1273, and 1281-1320; these read PRLA…DLSR, KAFY…NMCR, GYFY…NAAY, HNDT…NLVR, NKLC…LFSL, and QICR…KVSG.

It belongs to the protein kinase superfamily. Ser/Thr protein kinase family. As to quaternary structure, interacts with Kinesin-12 members KIN12A/PAKRP1 and KIN12B/PAKRP1L. Interacts with KIN7B/NACK2. In terms of tissue distribution, ubiquitous.

It is found in the cytoplasm. Its subcellular location is the cytoskeleton. The protein resides in the phragmoplast. The catalysed reaction is L-seryl-[protein] + ATP = O-phospho-L-seryl-[protein] + ADP + H(+). It carries out the reaction L-threonyl-[protein] + ATP = O-phospho-L-threonyl-[protein] + ADP + H(+). In terms of biological role, plays a role in conventional modes of cytokinesis in meristems and during male gametogenesis but also acts in nonconventional modes of cytokinesis (cellularization) during female gametogenesis. Constitutes a signaling module in association with Kinesin-12 members that is required to support phragmoplast expansion and cell-plate growth in plant cells. This Arabidopsis thaliana (Mouse-ear cress) protein is Serine/threonine-protein kinase TIO (TIO).